A 490-amino-acid polypeptide reads, in one-letter code: Adenylyltransferase and sulfurtransferase uba4 (490 aa).

Residues 33 to 54 are disordered; the sequence is EAAKTPPYSDSTETDRGSSSST. Residues Gly96, Asp117, 124–128, Lys141, and 185–186 contribute to the ATP site; these read SNLHR and DH. Positions 234 and 237 each coordinate Zn(2+). Residue Cys251 is the Glycyl thioester intermediate; for adenylyltransferase activity of the active site. Zn(2+)-binding residues include Cys323 and Cys326. Residues 379–488 enclose the Rhodanese domain; sequence EHGKPVLLDV…WKREVDSTLP (110 aa). Residue Cys443 is the Cysteine persulfide intermediate; for sulfurtransferase activity of the active site.

It in the N-terminal section; belongs to the HesA/MoeB/ThiF family. UBA4 subfamily. Zn(2+) is required as a cofactor.

The protein localises to the cytoplasm. It is found in the cytosol. The enzyme catalyses [molybdopterin-synthase sulfur-carrier protein]-C-terminal Gly-Gly + ATP + H(+) = [molybdopterin-synthase sulfur-carrier protein]-C-terminal Gly-Gly-AMP + diphosphate. It carries out the reaction [molybdopterin-synthase sulfur-carrier protein]-C-terminal Gly-Gly-AMP + S-sulfanyl-L-cysteinyl-[cysteine desulfurase] + AH2 = [molybdopterin-synthase sulfur-carrier protein]-C-terminal-Gly-aminoethanethioate + L-cysteinyl-[cysteine desulfurase] + A + AMP + 2 H(+). It functions in the pathway tRNA modification; 5-methoxycarbonylmethyl-2-thiouridine-tRNA biosynthesis. In terms of biological role, plays a central role in 2-thiolation of mcm(5)S(2)U at tRNA wobble positions of cytosolic tRNA(Lys), tRNA(Glu) and tRNA(Gln). Also essential during biosynthesis of the molybdenum cofactor. Acts by mediating the C-terminal thiocarboxylation of sulfur carriers URM1 and MOCS2A. Its N-terminus first activates urm1 and MOCS2A as acyl-adenylates (-COAMP), then the persulfide sulfur on the catalytic cysteine is transferred to URM1 and MOCS2A to form thiocarboxylation (-COSH) of their C-terminus. The reaction probably involves hydrogen sulfide that is generated from the persulfide intermediate and that acts as a nucleophile towards URM1 and MOCS2A. Subsequently, a transient disulfide bond is formed. Does not use thiosulfate as sulfur donor; NFS1 probably acting as a sulfur donor for thiocarboxylation reactions. The chain is Adenylyltransferase and sulfurtransferase uba4 from Pyricularia oryzae (strain 70-15 / ATCC MYA-4617 / FGSC 8958) (Rice blast fungus).